We begin with the raw amino-acid sequence, 101 residues long: Small ribosomal subunit protein uS14 (101 aa).

A disordered region spans residues methionine 1 to aspartate 20.

It belongs to the universal ribosomal protein uS14 family. Part of the 30S ribosomal subunit. Contacts proteins S3 and S10.

Its function is as follows. Binds 16S rRNA, required for the assembly of 30S particles and may also be responsible for determining the conformation of the 16S rRNA at the A site. This Rhodospirillum rubrum (strain ATCC 11170 / ATH 1.1.1 / DSM 467 / LMG 4362 / NCIMB 8255 / S1) protein is Small ribosomal subunit protein uS14.